A 484-amino-acid chain; its full sequence is MERSEQRVRAAWDCDPGKQADRDYREDGMDLGSDAGSSSSSRASSQSNSTKVTPCSECKSSSSPGGSLDLVSALEDYEEPFPVYQKKVIDEWAPEEDGEEEEEEDDRGYRDDGCPAREPGDVSARIGSSGSGSRSAATTMPSPMPNGNLHPHDPQDLRHNGNVVVAGRPNASRVPRRPIQKTQPPGSRRGGRNRASGGLCLQPPDGGTRVPEEPPAPPMDWEALEKHLAGLQFREQEVRNQGQARTNSTSAQKNERESIRQKLALGSFFDDGPGIYTSCSKSGKPSLSARLQSGMNLQICFVNDSGSDKDSDADDSKTETSLDTPLSPMSKQSSSYSDRDTTEEESESLDDMDFLTRQKKLQAEAKMALAMAKPMAKMQVEVEKQNRKKSPVADLLPHMPHISECLMKRSLKPTDLRDMTIGQLQVIVNDLHSQIESLNEELVQLLLIRDELHTEQDAMLVDIEDLTRHAESQQKHMAEKMPAK.

A compositionally biased stretch (basic and acidic residues) spans 1-28 (MERSEQRVRAAWDCDPGKQADRDYREDG). Disordered stretches follow at residues 1 to 74 (MERS…VSAL), 86 to 220 (KKVI…PPMD), 232 to 258 (QFRE…ERES), and 305 to 350 (SGSD…ESLD). Residues 33 to 67 (SDAGSSSSSRASSQSNSTKVTPCSECKSSSSPGGS) are compositionally biased toward low complexity. Over residues 92–106 (WAPEEDGEEEEEEDD) the composition is skewed to acidic residues. The segment covering 107–120 (RGYRDDGCPAREPG) has biased composition (basic and acidic residues). Positions 123 to 137 (SARIGSSGSGSRSAA) are enriched in low complexity. Residues 150-159 (HPHDPQDLRH) show a composition bias toward basic and acidic residues. Residues 239–252 (RNQGQARTNSTSAQ) show a composition bias toward polar residues. Residues 306–320 (GSDKDSDADDSKTET) are compositionally biased toward basic and acidic residues. Polar residues predominate over residues 321–332 (SLDTPLSPMSKQ). Acidic residues predominate over residues 341–350 (TTEEESESLD). Residues 421–455 (IGQLQVIVNDLHSQIESLNEELVQLLLIRDELHTE) adopt a coiled-coil conformation.

This sequence belongs to the SCHIP1 family. In terms of assembly, homooligomer (via coiled coil domain). Interacts with NF2; the interaction is direct. Interacts with ANK3.

In Mus musculus (Mouse), this protein is Schwannomin-interacting protein 1.